A 602-amino-acid polypeptide reads, in one-letter code: Elongation factor 4 (602 aa).

The region spanning 7–189 (SKIRNFCIIA…AVVSRIPHPQ (183 aa)) is the tr-type G domain. GTP-binding positions include 19 to 24 (DHGKST) and 136 to 139 (NKVD).

Belongs to the TRAFAC class translation factor GTPase superfamily. Classic translation factor GTPase family. LepA subfamily.

The protein localises to the cell inner membrane. The enzyme catalyses GTP + H2O = GDP + phosphate + H(+). Required for accurate and efficient protein synthesis under certain stress conditions. May act as a fidelity factor of the translation reaction, by catalyzing a one-codon backward translocation of tRNAs on improperly translocated ribosomes. Back-translocation proceeds from a post-translocation (POST) complex to a pre-translocation (PRE) complex, thus giving elongation factor G a second chance to translocate the tRNAs correctly. Binds to ribosomes in a GTP-dependent manner. This Prochlorococcus marinus subsp. pastoris (strain CCMP1986 / NIES-2087 / MED4) protein is Elongation factor 4.